The primary structure comprises 754 residues: Subtilisin-like protease SBT3.12 (754 aa).

The N-terminal stretch at 1 to 28 (MGIVKGRSRAGLFIGFLFIVNVGFCVFA) is a signal peptide. Residues 29-117 (QESSNEERKI…VAPNRKVELQ (89 aa)) constitute a propeptide, activation peptide. Residues 39–116 (YVVHLGVRRH…SVAPNRKVEL (78 aa)) enclose the Inhibitor I9 domain. One can recognise a Peptidase S8 domain in the interval 121-606 (IYDYLGLSPS…AGLVNAERAK (486 aa)). Asp-151 (charge relay system) is an active-site residue. Asn-206 carries an N-linked (GlcNAc...) asparagine glycan. His-224 serves as the catalytic Charge relay system. N-linked (GlcNAc...) asparagine glycans are attached at residues Asn-239 and Asn-369. The active-site Charge relay system is Ser-537. N-linked (GlcNAc...) asparagine glycans are attached at residues Asn-629 and Asn-740.

The protein belongs to the peptidase S8 family.

It localises to the secreted. The polypeptide is Subtilisin-like protease SBT3.12 (Arabidopsis thaliana (Mouse-ear cress)).